The chain runs to 239 residues: Ureidoacrylate amidohydrolase RutB (239 aa).

The active-site Proton acceptor is the Asp-35. Lys-144 is an active-site residue. Cys-177 functions as the Nucleophile in the catalytic mechanism.

It belongs to the isochorismatase family. RutB subfamily.

The catalysed reaction is (Z)-3-ureidoacrylate + H2O + H(+) = (Z)-3-aminoacrylate + NH4(+) + CO2. It catalyses the reaction (Z)-3-ureidoacrylate + H2O = (Z)-3-aminoacrylate + carbamate + H(+). The enzyme catalyses (Z)-2-methylureidoacrylate + H2O + H(+) = (Z)-2-methylaminoacrylate + NH4(+) + CO2. Its function is as follows. Hydrolyzes ureidoacrylate to form aminoacrylate and carbamate. The carbamate hydrolyzes spontaneously, thereby releasing one of the nitrogen atoms of the pyrimidine ring as ammonia and one of its carbon atoms as CO2. The protein is Ureidoacrylate amidohydrolase RutB of Caulobacter segnis (strain ATCC 21756 / DSM 7131 / JCM 7823 / NBRC 15250 / LMG 17158 / TK0059) (Mycoplana segnis).